Reading from the N-terminus, the 1522-residue chain is Dicer-like protein 1 (1522 aa).

The segment covering 1–12 (MTWAGDVEEQDD) has biased composition (acidic residues). The interval 1–37 (MTWAGDVEEQDDYFSCSDVSTSGDRRKRAPQTVTQEE) is disordered. In terms of domain architecture, Helicase ATP-binding spans 76–258 (LFLRAKMQNT…EHVREAAREL (183 aa)). 89–96 (LDTGTGKT) contacts ATP. The short motif at 202–205 (DEAH) is the DEAH box element. Positions 408–576 (WLNLYYERTT…DVEQEKAELI (169 aa)) constitute a Helicase C-terminal domain. In terms of domain architecture, Dicer dsRNA-binding fold spans 600–700 (SLSILSHFVA…LPTISKYLPA (101 aa)). Residues 859-980 (PFWKWSPQSR…ICPEPLHISN (122 aa)) enclose the PAZ domain. RNase III domains follow at residues 995–1166 (IIHR…MQHH) and 1222–1373 (AHKI…VDSE). E1262, D1359, and E1362 together coordinate Mg(2+). The DRBM domain maps to 1409–1478 (TRLSRLLSIN…SHAALEKLEG (70 aa)). The Zn(2+) site is built by C1421, H1449, C1490, and C1492.

Belongs to the helicase family. Dicer subfamily. The cofactor is Mg(2+). Requires Mn(2+) as cofactor.

In terms of biological role, dicer-like endonuclease involved in cleaving double-stranded RNA in the RNA interference (RNAi) pathway. Produces 21 to 25 bp dsRNAs (siRNAs) which target the selective destruction of homologous RNAs leading to sequence-specific suppression of gene expression, called post-transcriptional gene silencing (PTGS). Part of a broad host defense response against viral infection and transposons. The protein is Dicer-like protein 1 (DCL1) of Phaeosphaeria nodorum (strain SN15 / ATCC MYA-4574 / FGSC 10173) (Glume blotch fungus).